The following is a 319-amino-acid chain: Acetyl esterase (319 aa).

Positions 91 to 93 (HGG) match the Involved in the stabilization of the negatively charged intermediate by the formation of the oxyanion hole motif. Active-site residues include serine 165, aspartate 262, and histidine 292.

Belongs to the 'GDXG' lipolytic enzyme family. In terms of assembly, homodimer. Interacts with MalT and MelA.

It is found in the cytoplasm. Its function is as follows. Displays esterase activity towards short chain fatty esters (acyl chain length of up to 8 carbons). Able to hydrolyze triacetylglycerol (triacetin) and tributyrylglycerol (tributyrin), but not trioleylglycerol (triolein) or cholesterol oleate. Negatively regulates MalT activity by antagonizing maltotriose binding. Inhibits MelA galactosidase activity. This is Acetyl esterase from Escherichia coli O8 (strain IAI1).